The primary structure comprises 74 residues: ATP synthase subunit 9, mitochondrial (74 aa).

2 helical membrane passes run 8 to 28 and 50 to 70; these read MGAG…GNVF and ILGF…AFLI.

Belongs to the ATPase C chain family. F-type ATPases have 2 components, CF(1) - the catalytic core - and CF(0) - the membrane proton channel. CF(1) has five subunits: alpha(3), beta(3), gamma(1), delta(1), epsilon(1). CF(0) has three main subunits: a, b and c.

The protein localises to the mitochondrion membrane. In terms of biological role, this protein is one of the chains of the nonenzymatic membrane component (F0) of mitochondrial ATPase. The sequence is that of ATP synthase subunit 9, mitochondrial (ATP9) from Solanum tuberosum (Potato).